The sequence spans 310 residues: Transcription initiation factor IIB (310 aa).

The segment at 9–41 (DKQTVCPECGSTELIGDYERAEVVCAHCGLVID) adopts a TFIIB-type zinc-finger fold. The Zn(2+) site is built by cysteine 14, cysteine 17, cysteine 33, and cysteine 36. Tandem repeats lie at residues 127–210 (SELD…TREL) and 221–302 (DYVP…ELTE).

The protein belongs to the TFIIB family.

Stabilizes TBP binding to an archaeal box-A promoter. Also responsible for recruiting RNA polymerase II to the pre-initiation complex (DNA-TBP-TFIIB). The sequence is that of Transcription initiation factor IIB from Methanobrevibacter smithii (strain ATCC 35061 / DSM 861 / OCM 144 / PS).